Consider the following 240-residue polypeptide: Homeobox protein goosecoid (240 aa).

Positions K146–K205 form a DNA-binding region, homeobox. The tract at residues A199–S240 is disordered. A compositionally biased stretch (basic and acidic residues) spans T225 to S240.

This sequence belongs to the paired homeobox family. Bicoid subfamily.

The protein resides in the nucleus. The polypeptide is Homeobox protein goosecoid (gsc) (Danio rerio (Zebrafish)).